A 191-amino-acid polypeptide reads, in one-letter code: A-type ATP synthase subunit E (191 aa).

This sequence belongs to the V-ATPase E subunit family. As to quaternary structure, has multiple subunits with at least A(3), B(3), C, D, E, F, H, I and proteolipid K(x).

Its subcellular location is the cell membrane. Its function is as follows. Component of the A-type ATP synthase that produces ATP from ADP in the presence of a proton gradient across the membrane. This Methanoregula boonei (strain DSM 21154 / JCM 14090 / 6A8) protein is A-type ATP synthase subunit E.